A 374-amino-acid polypeptide reads, in one-letter code: Chaperone protein DnaJ (374 aa).

Residues 5–69 form the J domain; the sequence is DYYEVLGVSK…DKKAKYDQFG (65 aa). The CR-type zinc-finger motif lies at 141-223; it reads GVNKKTILNL…CHGKGVESKR (83 aa). Zn(2+) contacts are provided by Cys154, Cys157, Cys171, Cys174, Cys197, Cys200, Cys211, and Cys214. 4 CXXCXGXG motif repeats span residues 154 to 161, 171 to 178, 197 to 204, and 211 to 218; these read CTKCDGVG, CTKCNGAG, CDKCNGVG, and CKNCHGKG.

The protein belongs to the DnaJ family. As to quaternary structure, homodimer. It depends on Zn(2+) as a cofactor.

It is found in the cytoplasm. In terms of biological role, participates actively in the response to hyperosmotic and heat shock by preventing the aggregation of stress-denatured proteins and by disaggregating proteins, also in an autonomous, DnaK-independent fashion. Unfolded proteins bind initially to DnaJ; upon interaction with the DnaJ-bound protein, DnaK hydrolyzes its bound ATP, resulting in the formation of a stable complex. GrpE releases ADP from DnaK; ATP binding to DnaK triggers the release of the substrate protein, thus completing the reaction cycle. Several rounds of ATP-dependent interactions between DnaJ, DnaK and GrpE are required for fully efficient folding. Also involved, together with DnaK and GrpE, in the DNA replication of plasmids through activation of initiation proteins. The polypeptide is Chaperone protein DnaJ (Mesoplasma florum (strain ATCC 33453 / NBRC 100688 / NCTC 11704 / L1) (Acholeplasma florum)).